The chain runs to 520 residues: Bifunctional purine biosynthesis protein PurH (520 aa).

An MGS-like domain is found at 1-150; that stretch reads MSDDRKAIKR…KNHPSVAVVV (150 aa).

It belongs to the PurH family.

The catalysed reaction is (6R)-10-formyltetrahydrofolate + 5-amino-1-(5-phospho-beta-D-ribosyl)imidazole-4-carboxamide = 5-formamido-1-(5-phospho-D-ribosyl)imidazole-4-carboxamide + (6S)-5,6,7,8-tetrahydrofolate. The enzyme catalyses IMP + H2O = 5-formamido-1-(5-phospho-D-ribosyl)imidazole-4-carboxamide. It functions in the pathway purine metabolism; IMP biosynthesis via de novo pathway; 5-formamido-1-(5-phospho-D-ribosyl)imidazole-4-carboxamide from 5-amino-1-(5-phospho-D-ribosyl)imidazole-4-carboxamide (10-formyl THF route): step 1/1. It participates in purine metabolism; IMP biosynthesis via de novo pathway; IMP from 5-formamido-1-(5-phospho-D-ribosyl)imidazole-4-carboxamide: step 1/1. The sequence is that of Bifunctional purine biosynthesis protein PurH from Corynebacterium glutamicum (strain ATCC 13032 / DSM 20300 / JCM 1318 / BCRC 11384 / CCUG 27702 / LMG 3730 / NBRC 12168 / NCIMB 10025 / NRRL B-2784 / 534).